The chain runs to 638 residues: Cytoplasmic dynein 1 intermediate chain 2 (638 aa).

Basic and acidic residues-rich tracts occupy residues 1–13 and 20–43; these read MSDKSELKAELER and QIREEKKRKEEERKKKETDQKKEA. Disordered regions lie at residues 1–135 and 155–214; these read MSDK…GRGP and TYTK…EEKQ. Ser2 is modified (N-acetylserine). A Diphosphoserine modification is found at Ser51. Ser51, Ser73, Trp81, Pro84, and Ser90 each carry phosphoserine. Residues 88–97 are compositionally biased toward low complexity; sequence PSSKSVSTPS. Thr95 carries the post-translational modification Phosphothreonine. Ser97, Ser101, and Ser104 each carry phosphoserine. The span at 190-214 shows a compositional bias: basic and acidic residues; that stretch reads EKTLKKDEENDSKAPPHELTEEEKQ. WD repeat units lie at residues 277 to 326, 330 to 370, 379 to 420, 429 to 469, 474 to 519, 522 to 562, and 568 to 607; these read SKHR…TTPE, HCQS…RTPV, AHTH…HPQD, SKAV…AGIS, GHQG…PLYS, DNAD…EVPT, and EGNPALNRVRWTHSGREIAVGDSEGQIVIYDVGEQIAVPR.

It belongs to the dynein intermediate chain family. As to quaternary structure, homodimer. The cytoplasmic dynein 1 complex consists of two catalytic heavy chains (HCs) and a number of non-catalytic subunits presented by intermediate chains (ICs), light intermediate chains (LICs) and light chains (LCs); the composition seems to vary in respect to the IC, LIC and LC composition. The heavy chain homodimer serves as a scaffold for the probable homodimeric assembly of the respective non-catalytic subunits. The ICs and LICs bind directly to the HC dimer and the LCs assemble on the IC dimer. Interacts with DYNLT3. Interacts with DYNLT1. Interacts (dephosphorylated at Ser-90) with DCTN1. Interacts with BICD2. Interacts with SPEF2. Interacts with CFAP61. (Microbial infection) Interacts with human adenovirus 5 hexon protein; this interaction probably allows virus intracellular transport. Post-translationally, the phosphorylation status of Ser-90 appears to be involved in dynactin-dependent target binding. In terms of processing, pyrophosphorylation by 5-diphosphoinositol pentakisphosphate (5-IP7) promotes interaction with DCTN1. Serine pyrophosphorylation is achieved by Mg(2+)-dependent, but enzyme independent transfer of a beta-phosphate from a inositol pyrophosphate to a pre-phosphorylated serine residue.

It is found in the cytoplasm. The protein resides in the cytoskeleton. Acts as one of several non-catalytic accessory components of the cytoplasmic dynein 1 complex that are thought to be involved in linking dynein to cargos and to adapter proteins that regulate dynein function. Cytoplasmic dynein 1 acts as a motor for the intracellular retrograde motility of vesicles and organelles along microtubules. The intermediate chains mediate the binding of dynein to dynactin via its 150 kDa component (p150-glued) DCTN1. Involved in membrane-transport, such as Golgi apparatus, late endosomes and lysosomes. This is Cytoplasmic dynein 1 intermediate chain 2 from Homo sapiens (Human).